The chain runs to 338 residues: Biotin synthase (338 aa).

Residues 45 to 272 (DEVQMSTLLS…QSVVRLSAGR (228 aa)) form the Radical SAM core domain. [4Fe-4S] cluster contacts are provided by Cys60, Cys64, and Cys67. Residues Cys104, Cys135, Cys195, and Arg267 each coordinate [2Fe-2S] cluster.

The protein belongs to the radical SAM superfamily. Biotin synthase family. As to quaternary structure, homodimer. Requires [4Fe-4S] cluster as cofactor. [2Fe-2S] cluster is required as a cofactor.

The catalysed reaction is (4R,5S)-dethiobiotin + (sulfur carrier)-SH + 2 reduced [2Fe-2S]-[ferredoxin] + 2 S-adenosyl-L-methionine = (sulfur carrier)-H + biotin + 2 5'-deoxyadenosine + 2 L-methionine + 2 oxidized [2Fe-2S]-[ferredoxin]. Its pathway is cofactor biosynthesis; biotin biosynthesis; biotin from 7,8-diaminononanoate: step 2/2. Catalyzes the conversion of dethiobiotin (DTB) to biotin by the insertion of a sulfur atom into dethiobiotin via a radical-based mechanism. In Parvibaculum lavamentivorans (strain DS-1 / DSM 13023 / NCIMB 13966), this protein is Biotin synthase.